Consider the following 111-residue polypeptide: 2Fe-2S ferredoxin (111 aa).

The 2Fe-2S ferredoxin-type domain maps to 2 to 104 (PKIVILPHQD…DLVVEIPRYT (103 aa)). [2Fe-2S] cluster-binding residues include C42, C48, C51, and C87.

The protein belongs to the adrenodoxin/putidaredoxin family. It depends on [2Fe-2S] cluster as a cofactor.

In terms of biological role, ferredoxin are iron-sulfur proteins that transfer electrons in a wide variety of metabolic reactions. Although the function of this ferredoxin is unknown it is probable that it has a role as a cellular electron transfer protein. Involved in the in vivo assembly of the Fe-S clusters in a wide variety of iron-sulfur proteins. The sequence is that of 2Fe-2S ferredoxin (fdx) from Escherichia coli O157:H7.